Consider the following 414-residue polypeptide: Arrestin domain-containing protein 3 (414 aa).

2 short sequence motifs (PPxY motif) span residues 346–349 (PPSY) and 391–394 (PPLY). Positions 393–414 (LYSEIDPNPDQSADDRPSCPSR) are disordered. Over residues 405-414 (ADDRPSCPSR) the composition is skewed to basic and acidic residues.

This sequence belongs to the arrestin family. Interacts (via PPxY motifs) with NEDD4 (via WW domains). Interacts with ADRB2. Interacts with ADRB3. Interacts with HGS (via PPxY motifs). Does not bind TXN (thioredoxin). Interacts with ITCH.

The protein resides in the cytoplasm. Its subcellular location is the cell membrane. It localises to the lysosome. The protein localises to the endosome. It is found in the early endosome. Adapter protein that plays a role in regulating cell-surface expression of adrenergic receptors and probably also other G protein-coupled receptors. Plays a role in NEDD4-mediated ubiquitination and endocytosis af activated ADRB2 and subsequent ADRB2 degradation. May recruit NEDD4 to ADRB2. Alternatively, may function as adapter protein that does not play a major role in recruiting NEDD4 to ADRB2, but rather plays a role in a targeting ADRB2 to endosomes. This is Arrestin domain-containing protein 3 (ARRDC3) from Pongo abelii (Sumatran orangutan).